Reading from the N-terminus, the 447-residue chain is NADP-specific glutamate dehydrogenase (447 aa).

3 residues coordinate substrate: Lys-92, Gln-113, and Lys-116. Catalysis depends on Lys-128, which acts as the Proton donor. Residue Gly-167 coordinates substrate. The NADP(+) site is built by Thr-211 and Asn-242. Position 380 (Ser-380) interacts with substrate.

The protein belongs to the Glu/Leu/Phe/Val dehydrogenases family. In terms of assembly, homohexamer.

The catalysed reaction is L-glutamate + NADP(+) + H2O = 2-oxoglutarate + NH4(+) + NADPH + H(+). Its function is as follows. Catalyzes the reversible oxidative deamination of glutamate to alpha-ketoglutarate and ammonia. In Salmonella typhi, this protein is NADP-specific glutamate dehydrogenase (gdhA).